A 1136-amino-acid chain; its full sequence is Myosin-binding protein C, fast-type (1136 aa).

Disordered regions lie at residues 1-55 (MPEA…KKPD) and 151-177 (APRQ…DAGE). Residues 13-35 (KGKDAPKEAPAKQTPEEPPKEAP) show a composition bias toward basic and acidic residues. An Ig-like C2-type 1 domain is found at 46-149 (PTGIFLKKPD…CDSCSFNVDV (104 aa)). Basic and acidic residues predominate over residues 163-174 (SFKRSGDGKSED). Ig-like C2-type domains follow at residues 250–339 (SAAF…VKEP), 340–432 (PVLI…VEEK), 433–533 (QLEV…KQEP), and 534–633 (PKIH…VVDV). Fibronectin type-III domains are found at residues 636–732 (PPEA…IAPT) and 734–829 (APQH…IREI). An Ig-like C2-type 6 domain is found at 833–927 (PKIRLPRHLR…ATIRIRVVEK (95 aa)). Residues 930-1025 (PAENVMVKEV…SKNTARILKT (96 aa)) form the Fibronectin type-III 3 domain. The Ig-like C2-type 7 domain maps to 1043–1136 (PKFLTPLMDR…ECKLDVRVPQ (94 aa)).

It belongs to the immunoglobulin superfamily. MyBP family.

Functionally, thick filament-associated protein located in the crossbridge region of vertebrate striated muscle a bands. In vitro it binds MHC, F-actin and native thin filaments, and modifies the activity of actin-activated myosin ATPase. It may modulate muscle contraction or may play a more structural role. The protein is Myosin-binding protein C, fast-type (Mybpc2) of Mus musculus (Mouse).